The chain runs to 423 residues: Probable sodium/metabolite cotransporter BASS3, chloroplastic (423 aa).

The N-terminal 45 residues, 1 to 45 (MAAAVAASSSSSSSSCAAVGVATASHPHRHRQARFVVSPPAPASP), are a transit peptide targeting the chloroplast. A run of 9 helical transmembrane segments spans residues 106 to 126 (ALLPLVVAATAVAALGNPATF), 138 to 158 (LGGIMLSIGIKLSIDDFALAF), 165 to 187 (TIGYMAQYIVKPLMGVLIARAFG), 192 to 214 (FFAGFVLTCCVSGAQLSSYASFL), 231 to 251 (ISSVVVTPVLTGLLIGSVVPV), 254 to 274 (IAMAKSILQVVLVPVTLGLLL), 287 to 307 (PVMPFVAMLCTSLCIGSPLAI), 318 to 338 (FLLLLPIVTFHIAAFIVGYWI), and 380 to 400 (VPAACSVVIMAIFGLTLASYW).

The protein belongs to the bile acid:sodium symporter (BASS) (TC 2.A.28) family.

The protein resides in the membrane. It localises to the plastid. Its subcellular location is the chloroplast envelope. May function as sodium-coupled metabolite transporter across the chloroplast envelope. The chain is Probable sodium/metabolite cotransporter BASS3, chloroplastic (BASS3) from Oryza sativa subsp. japonica (Rice).